Reading from the N-terminus, the 928-residue chain is Serine/threonine-protein kinase atg1 (928 aa).

Residues Y6 to I315 form the Protein kinase domain. Residues I12–V20 and K35 contribute to the ATP site. The active-site Proton acceptor is the D149. Disordered stretches follow at residues P318–R470 and F544–A571. Positions T359–Y371 are enriched in basic and acidic residues. Residues T437–E452 show a composition bias toward polar residues. Basic and acidic residues-rich tracts occupy residues Q459–R470 and S548–Y564.

This sequence belongs to the protein kinase superfamily. Ser/Thr protein kinase family. APG1/unc-51/ULK1 subfamily. As to quaternary structure, homodimer. Forms a ternary complex with ATG13 and ATG17.

It is found in the cytoplasm. The protein resides in the preautophagosomal structure membrane. The catalysed reaction is L-seryl-[protein] + ATP = O-phospho-L-seryl-[protein] + ADP + H(+). It carries out the reaction L-threonyl-[protein] + ATP = O-phospho-L-threonyl-[protein] + ADP + H(+). In terms of biological role, serine/threonine protein kinase involved in the cytoplasm to vacuole transport (Cvt) and found to be essential in autophagy, where it is required for the formation of autophagosomes. Involved in the clearance of protein aggregates which cannot be efficiently cleared by the proteasome. Required for selective autophagic degradation of the nucleus (nucleophagy) as well as for mitophagy which contributes to regulate mitochondrial quantity and quality by eliminating the mitochondria to a basal level to fulfill cellular energy requirements and preventing excess ROS production. Also involved in endoplasmic reticulum-specific autophagic process, in selective removal of ER-associated degradation (ERAD) substrates. Plays a key role in ATG9 and ATG23 cycling through the pre-autophagosomal structure and is necessary to promote ATG18 binding to ATG9 through phosphorylation of ATG9. Catalyzes phosphorylation of ATG4, decreasing the interaction between ATG4 and ATG8 and impairing deconjugation of PE-conjugated forms of ATG8. The sequence is that of Serine/threonine-protein kinase atg1 from Aspergillus clavatus (strain ATCC 1007 / CBS 513.65 / DSM 816 / NCTC 3887 / NRRL 1 / QM 1276 / 107).